Here is a 109-residue protein sequence, read N- to C-terminus: MASIIFSAKDIFEQEFGREVRGYNKVEVDEFLDDVIKDYETYAALVKSLRQEIADLKEELTRKPKPSPVQAEPLEAAITSSMTNFDILKRLNRLEKEVFGKQILDNSDF.

A coiled-coil region spans residues 36 to 63 (IKDYETYAALVKSLRQEIADLKEELTRK).

Belongs to the GpsB family. As to quaternary structure, forms polymers through the coiled coil domains. Interacts with PBP1, MreC and EzrA.

The protein resides in the cytoplasm. Divisome component that associates with the complex late in its assembly, after the Z-ring is formed, and is dependent on DivIC and PBP2B for its recruitment to the divisome. Together with EzrA, is a key component of the system that regulates PBP1 localization during cell cycle progression. Its main role could be the removal of PBP1 from the cell pole after pole maturation is completed. Also contributes to the recruitment of PBP1 to the division complex. Not essential for septum formation. The chain is Cell cycle protein GpsB from Streptococcus pneumoniae serotype 4 (strain ATCC BAA-334 / TIGR4).